A 960-amino-acid polypeptide reads, in one-letter code: Semaphorin-6C (960 aa).

The first 23 residues, 1-23 (MPRAPHSMPLLLLLLLSLPQAQT), serve as a signal peptide directing secretion. The Extracellular segment spans residues 24–635 (AFPQDPIPLL…ASASRSIPIP (612 aa)). Residues 29-515 (PIPLLTSDLQ…FPGCIVYLSL (487 aa)) enclose the Sema domain. An N-linked (GlcNAc...) asparagine glycan is attached at Asn-69. 4 cysteine pairs are disulfide-bonded: Cys-110–Cys-120, Cys-138–Cys-147, Cys-261–Cys-372, and Cys-286–Cys-331. Asn-285 carries N-linked (GlcNAc...) asparagine glycosylation. Asn-436 carries an N-linked (GlcNAc...) asparagine glycan. Disulfide bonds link Cys-478/Cys-509, Cys-518/Cys-536, Cys-524/Cys-569, and Cys-528/Cys-544. Positions 555–624 (VDLTGNQESM…HTQGVRRDLS (70 aa)) are disordered. Residues 636–656 (LLLACVAAAFALGASVSGLLV) traverse the membrane as a helical segment. Residues 657 to 960 (SCACRRANRR…PAPHGSHFNF (304 aa)) are Cytoplasmic-facing. 3 disordered regions span residues 685–725 (LARL…SPPE), 745–792 (ASGG…PGQE), and 806–960 (HGPQ…HFNF). Residues 899–909 (RVPSGGPSRYS) are compositionally biased toward low complexity. A compositionally biased stretch (basic and acidic residues) spans 922 to 935 (PDGHRGRSLKRVDV). The segment covering 940-952 (SPKPPLATPPQPA) has biased composition (pro residues).

It belongs to the semaphorin family. Expressed in many regions of the developing nervous system, probably in neurons and their precursors, but also in nonneural tissue such as immature muscle and dermis. In adult, strong expression in the skeletal muscle and moderate expression in the brain, where cerebellum shows the highest expression. Also expressed in almost all areas of the CNS.

The protein resides in the cell membrane. Its function is as follows. Shows growth cone collapsing activity on dorsal root ganglion (DRG) neurons in vitro. May be a stop signal for the DRG neurons in their target areas, and possibly also for other neurons. May also be involved in the maintenance and remodeling of neuronal connections. This is Semaphorin-6C (Sema6c) from Rattus norvegicus (Rat).